Reading from the N-terminus, the 211-residue chain is Transmembrane protein 247 (211 aa).

2 stretches are compositionally biased toward basic and acidic residues: residues 1–10 (MAMEDREVME) and 31–45 (PEGK…EVPK). Residues 1–90 (MAMEDREVME…AGDGPGLESV (90 aa)) form a disordered region. Over residues 63 to 73 (PGPPRSLPPKS) the composition is skewed to pro residues. Residues 119-148 (KYLHQENERQRQHEEVMEQLQQQQQQQQAL) adopt a coiled-coil conformation. 2 consecutive transmembrane segments (helical) span residues 159 to 179 (LLLP…IHII) and 186 to 206 (VFFL…LCLI).

The protein resides in the membrane. The chain is Transmembrane protein 247 (Tmem247) from Mus musculus (Mouse).